A 338-amino-acid chain; its full sequence is Elongation factor Ts, mitochondrial (338 aa).

The N-terminal 55 residues, 1-55 (MSLLRSLRLCLVARTGSCPLSALGPGPLLPSLQAGLPLLQSPQQWHTFHSGSWLS), are a transit peptide targeting the mitochondrion. N6-succinyllysine occurs at positions 89, 146, and 205. A Phosphoserine modification is found at Ser283.

The protein belongs to the EF-Ts family.

Its subcellular location is the mitochondrion. Associates with the EF-Tu.GDP complex and induces the exchange of GDP to GTP. It remains bound to the aminoacyl-tRNA.EF-Tu.GTP complex up to the GTP hydrolysis stage on the ribosome. This is Elongation factor Ts, mitochondrial from Bos taurus (Bovine).